The primary structure comprises 602 residues: Elongation factor 4 (602 aa).

The region spanning 7 to 188 (ENIRNFSIIA…AIIELIPPPK (182 aa)) is the tr-type G domain. GTP contacts are provided by residues 19–24 (DHGKST) and 135–138 (NKID).

This sequence belongs to the TRAFAC class translation factor GTPase superfamily. Classic translation factor GTPase family. LepA subfamily.

Its subcellular location is the cell inner membrane. It carries out the reaction GTP + H2O = GDP + phosphate + H(+). In terms of biological role, required for accurate and efficient protein synthesis under certain stress conditions. May act as a fidelity factor of the translation reaction, by catalyzing a one-codon backward translocation of tRNAs on improperly translocated ribosomes. Back-translocation proceeds from a post-translocation (POST) complex to a pre-translocation (PRE) complex, thus giving elongation factor G a second chance to translocate the tRNAs correctly. Binds to ribosomes in a GTP-dependent manner. The polypeptide is Elongation factor 4 (Chlamydia caviae (strain ATCC VR-813 / DSM 19441 / 03DC25 / GPIC) (Chlamydophila caviae)).